The sequence spans 194 residues: Anaphase-promoting complex subunit CDC26 (194 aa).

The interval 47-194 (EPMDQSEPPR…PSSNTRSHRH (148 aa)) is disordered. 2 stretches are compositionally biased toward polar residues: residues 79-94 (GECT…TSAR) and 102-112 (LTLSTPVNPVS). Composition is skewed to low complexity over residues 154–166 (DESP…PESP) and 174–194 (TPGN…SHRH).

The protein belongs to the CDC26 family. In terms of assembly, the APC/C complex is probably composed of at least 12 subunits: apc-2, apc-10, apc-11, cdc-26, emb-1, emb-27, emb-30, mat-1, mat-2, mat-3, such-1 and gfi-3.

It localises to the nucleus. It functions in the pathway protein modification; protein ubiquitination. Functionally, probable component of the anaphase promoting complex/cyclosome (APC/C), a cell cycle-regulated E3 ubiquitin ligase that controls progression through mitosis and the G1 phase of the cell cycle. The APC/C complex acts by mediating ubiquitination and subsequent degradation of target proteins. Developmental role in early embryogenesis and the metaphase to anaphase transition in meiosis and mitosis. Required for embryonic anterior-posterior axis formation. The sequence is that of Anaphase-promoting complex subunit CDC26 from Caenorhabditis elegans.